We begin with the raw amino-acid sequence, 290 residues long: Ribosomal RNA small subunit methyltransferase H (290 aa).

Residues 35-37 (GGH), Asp-54, Phe-81, Asp-97, and Gln-104 contribute to the S-adenosyl-L-methionine site.

This sequence belongs to the methyltransferase superfamily. RsmH family.

The protein localises to the cytoplasm. It catalyses the reaction cytidine(1402) in 16S rRNA + S-adenosyl-L-methionine = N(4)-methylcytidine(1402) in 16S rRNA + S-adenosyl-L-homocysteine + H(+). Specifically methylates the N4 position of cytidine in position 1402 (C1402) of 16S rRNA. The chain is Ribosomal RNA small subunit methyltransferase H from Picosynechococcus sp. (strain ATCC 27264 / PCC 7002 / PR-6) (Agmenellum quadruplicatum).